The following is a 207-amino-acid chain: MARYIGPKAKLSRREGTDLFLKSARRSLADKCKLDSKPGQHGRTSGARTSDYGTQLREKQKVKRIYGVLERQFRRYFAEADRLKGNTGENLLQLLESRLDNVVYRMGFGSTRAEARQLVSHKAIMVNGVVSNIPSMQVKAGDVVAVREQKKKQARILEALSLAEQGGLPSWVAVDSKKFEGTFKQKPERSDIAGDINESLIVELYSR.

Residues 31-55 (KCKLDSKPGQHGRTSGARTSDYGTQ) are disordered. Residues 42–53 (GRTSGARTSDYG) are compositionally biased toward polar residues. The S4 RNA-binding domain maps to 97–157 (SRLDNVVYRM…EQKKKQARIL (61 aa)).

It belongs to the universal ribosomal protein uS4 family. As to quaternary structure, part of the 30S ribosomal subunit. Contacts protein S5. The interaction surface between S4 and S5 is involved in control of translational fidelity.

Functionally, one of the primary rRNA binding proteins, it binds directly to 16S rRNA where it nucleates assembly of the body of the 30S subunit. In terms of biological role, with S5 and S12 plays an important role in translational accuracy. This Paraburkholderia xenovorans (strain LB400) protein is Small ribosomal subunit protein uS4.